We begin with the raw amino-acid sequence, 301 residues long: Probable alpha-L-glutamate ligase (301 aa).

The 184-residue stretch at 104-287 (LQLLSRKGIG…VAGMIIQYLE (184 aa)) folds into the ATP-grasp domain. Residues K141, 178-179 (EY), D187, and 211-213 (RSN) each bind ATP. Residues D248, E260, and N262 each contribute to the Mg(2+) site. 3 residues coordinate Mn(2+): D248, E260, and N262.

The protein belongs to the RimK family. Mg(2+) is required as a cofactor. It depends on Mn(2+) as a cofactor.

The protein is Probable alpha-L-glutamate ligase of Ectopseudomonas mendocina (strain ymp) (Pseudomonas mendocina).